Consider the following 322-residue polypeptide: Sideroflexin-2 (322 aa).

Met-1 is modified (N-acetylmethionine). 5 helical membrane passes run 100–122 (MIITGFMLQFYRTMPAVIFWQWV), 142–164 (SVRQMAVSYITATTTAVATAVGM), 174–192 (LVGRWVPFAAVAAANCVNI), 228–250 (VVISRITMAAPGMILLPVLMERL), and 265–287 (PLQVLLSGCFLIFMVPVACGLFP).

It belongs to the sideroflexin family.

It is found in the mitochondrion inner membrane. Its subcellular location is the mitochondrion outer membrane. It carries out the reaction L-serine(in) = L-serine(out). Functionally, mitochondrial amino-acid transporter that mediates transport of serine into mitochondria. Involved in mitochondrial iron homeostasis by regulating heme biosynthesis. The chain is Sideroflexin-2 from Bos taurus (Bovine).